A 102-amino-acid polypeptide reads, in one-letter code: NADH-quinone oxidoreductase subunit K (102 aa).

The next 3 helical transmembrane spans lie at Leu6–Val26, Ile30–Val50, and Val62–Leu82.

Belongs to the complex I subunit 4L family. In terms of assembly, NDH-1 is composed of 13 different subunits. Subunits NuoA, H, J, K, L, M, N constitute the membrane sector of the complex.

The protein localises to the cell inner membrane. It catalyses the reaction a quinone + NADH + 5 H(+)(in) = a quinol + NAD(+) + 4 H(+)(out). In terms of biological role, NDH-1 shuttles electrons from NADH, via FMN and iron-sulfur (Fe-S) centers, to quinones in the respiratory chain. The immediate electron acceptor for the enzyme in this species is believed to be ubiquinone. Couples the redox reaction to proton translocation (for every two electrons transferred, four hydrogen ions are translocated across the cytoplasmic membrane), and thus conserves the redox energy in a proton gradient. This Pseudomonas aeruginosa (strain LESB58) protein is NADH-quinone oxidoreductase subunit K.